A 206-amino-acid polypeptide reads, in one-letter code: Small ribosomal subunit protein uS4 (206 aa).

Residues G96–K156 enclose the S4 RNA-binding domain.

The protein belongs to the universal ribosomal protein uS4 family. Part of the 30S ribosomal subunit. Contacts protein S5. The interaction surface between S4 and S5 is involved in control of translational fidelity.

In terms of biological role, one of the primary rRNA binding proteins, it binds directly to 16S rRNA where it nucleates assembly of the body of the 30S subunit. With S5 and S12 plays an important role in translational accuracy. The protein is Small ribosomal subunit protein uS4 of Escherichia fergusonii (strain ATCC 35469 / DSM 13698 / CCUG 18766 / IAM 14443 / JCM 21226 / LMG 7866 / NBRC 102419 / NCTC 12128 / CDC 0568-73).